Reading from the N-terminus, the 573-residue chain is Putative ATP-dependent RNA helicase R563 (573 aa).

The 177-residue stretch at 57–233 folds into the Helicase ATP-binding domain; that stretch reads INPKTPYKGL…ALTMNLLVRN (177 aa). 70–77 lines the ATP pocket; it reads HRIGAGKT. A DEAH box motif is present at residues 179 to 182; that stretch reads DEVH. The Helicase C-terminal domain maps to 374-551; it reads KILRKIKRCN…AFEKALKEAA (178 aa).

The protein belongs to the DEAD box helicase family. DEAH subfamily.

Its subcellular location is the virion. The catalysed reaction is ATP + H2O = ADP + phosphate + H(+). The chain is Putative ATP-dependent RNA helicase R563 from Acanthamoeba polyphaga mimivirus (APMV).